The following is a 407-amino-acid chain: 1-deoxy-D-xylulose 5-phosphate reductoisomerase (407 aa).

Residues Thr25, Gly26, Ser27, Ile28, Asn53, and Asn136 each contribute to the NADPH site. Lys137 serves as a coordination point for 1-deoxy-D-xylulose 5-phosphate. Residue Glu138 participates in NADPH binding. Asp162 serves as a coordination point for Mn(2+). Residues Ser163, Glu164, Ser188, and His211 each contribute to the 1-deoxy-D-xylulose 5-phosphate site. Glu164 provides a ligand contact to Mn(2+). Gly217 provides a ligand contact to NADPH. Residues Ser224, Asn229, Lys230, and Glu233 each coordinate 1-deoxy-D-xylulose 5-phosphate. A Mn(2+)-binding site is contributed by Glu233.

The protein belongs to the DXR family. Mg(2+) serves as cofactor. The cofactor is Mn(2+).

It catalyses the reaction 2-C-methyl-D-erythritol 4-phosphate + NADP(+) = 1-deoxy-D-xylulose 5-phosphate + NADPH + H(+). It functions in the pathway isoprenoid biosynthesis; isopentenyl diphosphate biosynthesis via DXP pathway; isopentenyl diphosphate from 1-deoxy-D-xylulose 5-phosphate: step 1/6. In terms of biological role, catalyzes the NADPH-dependent rearrangement and reduction of 1-deoxy-D-xylulose-5-phosphate (DXP) to 2-C-methyl-D-erythritol 4-phosphate (MEP). The polypeptide is 1-deoxy-D-xylulose 5-phosphate reductoisomerase (Nitrobacter hamburgensis (strain DSM 10229 / NCIMB 13809 / X14)).